The sequence spans 127 residues: Insulin-like growth factor 3.L (127 aa).

The signal sequence occupies residues 1–49 (MPVTAMCLQDSKKLKKAKLTRKKVTPFPFSRMVLCLSLVFTLYVEATNA). Residues 49–80 (ARCLRPRSKELLCGSELVDILQFICGPTGFYV) form a b region. 3 cysteine pairs are disulfide-bonded: cysteine 61–cysteine 99, cysteine 73–cysteine 112, and cysteine 98–cysteine 103. The segment at 81–92 (SKGASFRNRNRP) is c. An a region spans residues 93-113 (GIVEECCFCGCSVAILESYCA). The d stretch occupies residues 114-121 (APVTNFTG). Positions 122–127 (REEQKS) are cleaved as a propeptide — e peptide.

This sequence belongs to the insulin family.

It localises to the secreted. The insulin-like growth factors, isolated from plasma, are structurally and functionally related to insulin but have a much higher growth-promoting activity. Promotes anterior neural development. This chain is Insulin-like growth factor 3.L, found in Xenopus laevis (African clawed frog).